A 329-amino-acid chain; its full sequence is Cytosolic sulfotransferase 6 (329 aa).

3'-phosphoadenylyl sulfate is bound at residue 74 to 79 (KCGTTW). The Proton acceptor role is filled by His-140. Residues Arg-162, Ser-170, and 295-297 (RKG) each bind 3'-phosphoadenylyl sulfate.

It belongs to the sulfotransferase 1 family.

The protein localises to the cytoplasm. Sulfotransferase that utilizes 3'-phospho-5'-adenylyl sulfate (PAPS) as sulfonate donor. This is Cytosolic sulfotransferase 6 (SOT6) from Arabidopsis thaliana (Mouse-ear cress).